The following is a 328-amino-acid chain: DNA-directed RNA polymerase subunit alpha (328 aa).

An alpha N-terminal domain (alpha-NTD) region spans residues 1–234 (MQGSVTEFLK…EQLDAFVDLR (234 aa)). The interval 248 to 328 (FDPILLRPVD…NWPPASIAED (81 aa)) is alpha C-terminal domain (alpha-CTD).

This sequence belongs to the RNA polymerase alpha chain family. In terms of assembly, homodimer. The RNAP catalytic core consists of 2 alpha, 1 beta, 1 beta' and 1 omega subunit. When a sigma factor is associated with the core the holoenzyme is formed, which can initiate transcription.

The enzyme catalyses RNA(n) + a ribonucleoside 5'-triphosphate = RNA(n+1) + diphosphate. Its function is as follows. DNA-dependent RNA polymerase catalyzes the transcription of DNA into RNA using the four ribonucleoside triphosphates as substrates. In Haemophilus influenzae (strain PittEE), this protein is DNA-directed RNA polymerase subunit alpha.